The following is a 432-amino-acid chain: Ciliated left-right organizer protein containing ZP-N domains homolog (432 aa).

Expressed specifically by cells of the ciliated left-right organizer.

This chain is Ciliated left-right organizer protein containing ZP-N domains homolog (ciroz), found in Danio rerio (Zebrafish).